An 87-amino-acid chain; its full sequence is Prohibitin 1 (87 aa).

T8 bears the Phosphothreonine mark. Residue K62 is modified to N6-acetyllysine. At Y83 the chain carries Phosphotyrosine.

This sequence belongs to the prohibitin family. As to quaternary structure, the mitochondrial prohibitin complex consists of two subunits (PHB1 and PHB2), assembled into a membrane-associated ring-shaped supercomplex of approximately 1 mDa. Interacts with STOML2. Interacts with MAP1LC3B (membrane-bound form LC3-II); the interaction requires PHB2 and takes place upon Parkin-mediated mitochondrial damage. Interacts with STAT3 (unphosphorylated or phosphorylated at 'Ser-727'). Interacts with CLPB. Interacts with CD86 (via cytoplasmic domain); the interactions increases after priming with CD40.

It localises to the mitochondrion inner membrane. Its subcellular location is the nucleus. It is found in the cytoplasm. The protein localises to the cell membrane. Protein with pleiotropic attributes mediated in a cell-compartment- and tissue-specific manner, which include the plasma membrane-associated cell signaling functions, mitochondrial chaperone, and transcriptional co-regulator of transcription factors in the nucleus. Plays a role in adipose tissue and glucose homeostasis in a sex-specific manner. Contributes to pulmonary vascular remodeling by accelerating proliferation of pulmonary arterial smooth muscle cells. Its function is as follows. In the mitochondria, together with PHB2, forms large ring complexes (prohibitin complexes) in the inner mitochondrial membrane (IMM) and functions as a chaperone protein that stabilizes mitochondrial respiratory enzymes and maintains mitochondrial integrity in the IMM, which is required for mitochondrial morphogenesis, neuronal survival, and normal lifespan. The prohibitin complex, with DNAJC19, regulates cardiolipin remodeling and the protein turnover of OMA1 in a cardiolipin-binding manner. Regulates mitochondrial respiration activity playing a role in cellular aging. The prohibitin complex plays a role of mitophagy receptor involved in targeting mitochondria for autophagic degradation. Involved in mitochondrial-mediated antiviral innate immunity, activates RIG-I-mediated signal transduction and production of IFNB1 and proinflammatory cytokine IL6. In terms of biological role, in the nucleus, acts as a transcription coregulator, enhances promoter binding by TP53, a transcription factor it activates, but reduces the promoter binding by E2F1, a transcription factor it represses. Interacts with STAT3 to affect IL17 secretion in T-helper Th17 cells. Functionally, in the plasma membrane, cooperates with CD86 to mediate CD86-signaling in B lymphocytes that regulates the level of IgG1 produced through the activation of distal signaling intermediates. Upon CD40 engagement, required to activate NF-kappa-B signaling pathway via phospholipase C and protein kinase C activation. This is Prohibitin 1 (PHB1) from Mesocricetus auratus (Golden hamster).